A 145-amino-acid polypeptide reads, in one-letter code: Ribosome maturation factor RimP (145 aa).

The protein belongs to the RimP family.

The protein localises to the cytoplasm. In terms of biological role, required for maturation of 30S ribosomal subunits. The protein is Ribosome maturation factor RimP of Borreliella afzelii (strain PKo) (Borrelia afzelii).